Here is a 206-residue protein sequence, read N- to C-terminus: Translation initiation factor IF-3 (206 aa).

It belongs to the IF-3 family. As to quaternary structure, monomer.

The protein localises to the cytoplasm. Its function is as follows. IF-3 binds to the 30S ribosomal subunit and shifts the equilibrium between 70S ribosomes and their 50S and 30S subunits in favor of the free subunits, thus enhancing the availability of 30S subunits on which protein synthesis initiation begins. The polypeptide is Translation initiation factor IF-3 (Shigella flexneri).